We begin with the raw amino-acid sequence, 221 residues long: Transcription factor bHLH126 (221 aa).

2 disordered regions span residues 1-46 and 104-132; these read MDPY…KKLL and RRDE…VGKS. The bHLH domain occupies 42–94; that stretch reads KKKLLHRDIERQRRQEMATLFATLRTHLPLKYIKGKRAVSDHVNGAVNFIKDT.

As to quaternary structure, homodimer.

It is found in the nucleus. This Arabidopsis thaliana (Mouse-ear cress) protein is Transcription factor bHLH126 (BHLH126).